A 330-amino-acid chain; its full sequence is Peptide transport system ATP-binding protein SapD (330 aa).

The ABC transporter domain occupies 6 to 259 (IRNLTIEFKT…PHHPYTQALI (254 aa)). 40 to 47 (GESGSGKS) serves as a coordination point for ATP.

Belongs to the ABC transporter superfamily.

The protein localises to the cell inner membrane. In terms of biological role, involved in a peptide intake transport system that plays a role in the resistance to antimicrobial peptides. The chain is Peptide transport system ATP-binding protein SapD from Salmonella typhimurium (strain LT2 / SGSC1412 / ATCC 700720).